The sequence spans 276 residues: Extracellular metalloprotease 1 (276 aa).

Residues 1–18 (MRVSVPVLALAFGSLAAA) form the signal peptide. His-191 lines the Zn(2+) pocket. The active site involves Glu-192. Residue His-195 coordinates Zn(2+). Residues 211-233 (GDYVSDTPPQRSPSSGCPVGRDS) are disordered. The cysteines at positions 227 and 253 are disulfide-linked.

This sequence belongs to the peptidase M43B family.

The protein localises to the secreted. Functionally, secreted metalloproteinase that allows assimilation of proteinaceous substrates. Pays a pivotal role as a pathogenicity determinant during infections and contributes to the ability of the pathogen to persist within the mammalian host. Digests an immunodominant cell surface antigen (SOWgp) and prevents host recognition of endospores during the phase of development when these fungal cells are most vulnerable to phagocytic cell defenses. This chain is Extracellular metalloprotease 1 (MEP1), found in Coccidioides posadasii (strain C735) (Valley fever fungus).